The sequence spans 339 residues: GTP 3',8-cyclase (339 aa).

A Radical SAM core domain is found at 13–249; the sequence is RYGRPLRDLR…GEVAQRHAFA (237 aa). Arginine 22 is a binding site for GTP. Residues cysteine 29 and cysteine 33 each contribute to the [4Fe-4S] cluster site. Residue tyrosine 35 coordinates S-adenosyl-L-methionine. Cysteine 36 is a [4Fe-4S] cluster binding site. Residue arginine 75 participates in GTP binding. Residue glycine 79 participates in S-adenosyl-L-methionine binding. Threonine 106 contributes to the GTP binding site. Position 130 (serine 130) interacts with S-adenosyl-L-methionine. Residue lysine 168 participates in GTP binding. Methionine 202 contacts S-adenosyl-L-methionine. Residues cysteine 266 and cysteine 269 each coordinate [4Fe-4S] cluster. 271–273 contributes to the GTP binding site; that stretch reads RAR. Cysteine 283 lines the [4Fe-4S] cluster pocket.

It belongs to the radical SAM superfamily. MoaA family. In terms of assembly, monomer and homodimer. It depends on [4Fe-4S] cluster as a cofactor.

The enzyme catalyses GTP + AH2 + S-adenosyl-L-methionine = (8S)-3',8-cyclo-7,8-dihydroguanosine 5'-triphosphate + 5'-deoxyadenosine + L-methionine + A + H(+). Its pathway is cofactor biosynthesis; molybdopterin biosynthesis. Catalyzes the cyclization of GTP to (8S)-3',8-cyclo-7,8-dihydroguanosine 5'-triphosphate. This Xanthomonas campestris pv. campestris (strain 8004) protein is GTP 3',8-cyclase.